We begin with the raw amino-acid sequence, 652 residues long: DNA ligase (652 aa).

NAD(+)-binding positions include 29-33 (DSEYD), 78-79 (SL), and glutamate 107. Lysine 109 serves as the catalytic N6-AMP-lysine intermediate. NAD(+)-binding residues include arginine 130, glutamate 164, lysine 278, and lysine 302. The Zn(2+) site is built by cysteine 395, cysteine 398, cysteine 413, and cysteine 418. Positions 577–652 (VADAALSGLT…VRDEAWLESL (76 aa)) constitute a BRCT domain.

This sequence belongs to the NAD-dependent DNA ligase family. LigA subfamily. Mg(2+) serves as cofactor. The cofactor is Mn(2+).

It carries out the reaction NAD(+) + (deoxyribonucleotide)n-3'-hydroxyl + 5'-phospho-(deoxyribonucleotide)m = (deoxyribonucleotide)n+m + AMP + beta-nicotinamide D-nucleotide.. Functionally, DNA ligase that catalyzes the formation of phosphodiester linkages between 5'-phosphoryl and 3'-hydroxyl groups in double-stranded DNA using NAD as a coenzyme and as the energy source for the reaction. It is essential for DNA replication and repair of damaged DNA. This chain is DNA ligase, found in Streptococcus pneumoniae (strain Taiwan19F-14).